The sequence spans 483 residues: Chromosomal replication initiator protein DnaA (483 aa).

The domain I, interacts with DnaA modulators stretch occupies residues 1–71 (MKEFWQTCVS…EALAAEWYQR (71 aa)). Positions 71-145 (RPVQVQFELP…DAANIVYERS (75 aa)) are domain II. The tract at residues 146–362 (RLNTDLTFEN…GALRKVLAYA (217 aa)) is domain III, AAA+ region. 4 residues coordinate ATP: glycine 190, glycine 192, lysine 193, and threonine 194. A domain IV, binds dsDNA region spans residues 363-483 (RFHGREALNV…LHVLEQTLKG (121 aa)).

The protein belongs to the DnaA family. Oligomerizes as a right-handed, spiral filament on DNA at oriC.

Its subcellular location is the cytoplasm. In terms of biological role, plays an essential role in the initiation and regulation of chromosomal replication. ATP-DnaA binds to the origin of replication (oriC) to initiate formation of the DNA replication initiation complex once per cell cycle. Binds the DnaA box (a 9 base pair repeat at the origin) and separates the double-stranded (ds)DNA. Forms a right-handed helical filament on oriC DNA; dsDNA binds to the exterior of the filament while single-stranded (ss)DNA is stabiized in the filament's interior. The ATP-DnaA-oriC complex binds and stabilizes one strand of the AT-rich DNA unwinding element (DUE), permitting loading of DNA polymerase. After initiation quickly degrades to an ADP-DnaA complex that is not apt for DNA replication. Binds acidic phospholipids. This chain is Chromosomal replication initiator protein DnaA, found in Bordetella avium (strain 197N).